The chain runs to 493 residues: EGF-containing fibulin-like extracellular matrix protein 1 (493 aa).

An N-terminal signal peptide occupies residues 1 to 17; that stretch reads MLKALFLTMLTLALVKS. One can recognise an EGF-like 1; atypical domain in the interval 26–71; that stretch reads YTQCTDGYEWDPVRQQCKDIDECDIVPDACKGGMKCVNHYGGYLCL. One can recognise an EGF-like 2; calcium-binding domain in the interval 173–213; that stretch reads DIDECTAGTHNCRADQVCINLRGSFACQCPPGYQKRGEQCV. Disulfide bonds link C177-C190, C184-C199, C201-C212, C218-C228, C224-C237, C239-C252, C258-C268, C264-C277, C279-C292, C298-C309, C305-C318, C320-C332, C338-C350, C344-C359, and C365-C377. The 40-residue stretch at 214-253 folds into the EGF-like 3; calcium-binding domain; that stretch reads DIDECTIPPYCHQRCVNTPGSFYCQCSPGFQLAANNYTCV. N249 carries an N-linked (GlcNAc...) asparagine glycan. Positions 254 to 293 constitute an EGF-like 4; calcium-binding domain; it reads DINECDASNQCAQQCYNILGSFICQCNQGYELSSDRLNCE. Residues 259-493 are mediates interaction with TIMP3; that stretch reads DASNQCAQQC…LTIIVGPFSF (235 aa). Residues 294–333 enclose the EGF-like 5; calcium-binding domain; sequence DIDECRTSSYLCQYQCVNEPGKFSCMCPQGYQVVRSRTCQ. The EGF-like 6; calcium-binding domain maps to 334 to 378; the sequence is DINECETTNECREDEMCWNYHGGFRCYPRNPCQDPYILTPENRCV.

It belongs to the fibulin family. In terms of assembly, interacts with ECM1. Interacts with TIMP3.

The protein localises to the secreted. It is found in the extracellular space. The protein resides in the extracellular matrix. In terms of biological role, binds EGFR, the EGF receptor, inducing EGFR autophosphorylation and the activation of downstream signaling pathways. May play a role in cell adhesion and migration. May function as a negative regulator of chondrocyte differentiation. In the olfactory epithelium, it may regulate glial cell migration, differentiation and the ability of glial cells to support neuronal neurite outgrowth. This Macaca fascicularis (Crab-eating macaque) protein is EGF-containing fibulin-like extracellular matrix protein 1 (EFEMP1).